The sequence spans 185 residues: Large ribosomal subunit protein uL5 (185 aa).

It belongs to the universal ribosomal protein uL5 family. Part of the 50S ribosomal subunit; part of the 5S rRNA/L5/L18/L25 subcomplex. Contacts the 5S rRNA and the P site tRNA. Forms a bridge to the 30S subunit in the 70S ribosome.

In terms of biological role, this is one of the proteins that bind and probably mediate the attachment of the 5S RNA into the large ribosomal subunit, where it forms part of the central protuberance. In the 70S ribosome it contacts protein S13 of the 30S subunit (bridge B1b), connecting the 2 subunits; this bridge is implicated in subunit movement. Contacts the P site tRNA; the 5S rRNA and some of its associated proteins might help stabilize positioning of ribosome-bound tRNAs. In Rhodopseudomonas palustris (strain BisA53), this protein is Large ribosomal subunit protein uL5.